The sequence spans 439 residues: SH3 domain-containing protein 1 (439 aa).

The region spanning 32-263 (DAVVVDEEEL…MIAEEEAIGS (232 aa)) is the BAR domain. The span at 277–291 (SLPQQEPNSNSSGEI) shows a compositional bias: polar residues. A disordered region spans residues 277-362 (SLPQQEPNSN…SDDHHNHQLL (86 aa)). Residues 318–358 (SPKDEMKSSPQEETKSNHQKEIKSSPQEEIKKSNGSDDHHN) show a composition bias toward basic and acidic residues. The SH3 domain maps to 366–425 (DSYFLAKVVHPFDAQAPGELSLAVDDYVIVRQVAGTGWSEGEYKGKAGWFPSAYVEKQEK).

As to quaternary structure, interacts with the auxilin-like protein AUXI1. As to expression, highly expressed in flowers. Detected in seedlings, roots, leaves and stems.

It is found in the cytoplasmic vesicle. It localises to the clathrin-coated vesicle. The protein localises to the cell membrane. Its subcellular location is the golgi apparatus. The protein resides in the trans-Golgi network. It is found in the endoplasmic reticulum. Functionally, lipid binding protein bound strongly to phosphatidic acid, phosphatidylinositol-4-phosphate and phosphatidylinositol-4,5-bisphosphate. Binds actin in vitro. Involved in trafficking and modification of clathrin-coated vesicles. This Arabidopsis thaliana (Mouse-ear cress) protein is SH3 domain-containing protein 1 (SH3P1).